We begin with the raw amino-acid sequence, 649 residues long: FAS-associated factor 1 (649 aa).

A UBA domain is found at 1–57; the sequence is MASNMDREMILADFQACTGIENIDEAITLLEQNNWDLVAAINGVIPQENGILQSDFG. Disordered regions lie at residues 56-84 and 266-290; these read FGGETMPGPTFDPASHPAPASTPSSSAFR and RRTSPVQTREQSEEQSTDVHMVSDS. The span at 68-82 shows a compositional bias: low complexity; the sequence is PASHPAPASTPSSSA. Ser319 carries the phosphoserine modification. The UBX domain maps to 568–645; the sequence is NAEPVSKLRI…NLFPQETLFL (78 aa). Thr579 carries the phosphothreonine modification. Position 581 is a phosphoserine (Ser581).

Interacts with CDT1 and ATPase VCP/p97. Interacts (via UBA domain) with FAS (via death domain). Interacts (via UBA domain) with NLRP12 (via DAPIN/PYRIN domain).

It localises to the nucleus. In terms of biological role, ubiquitin-binding protein. Required for the progression of DNA replication forks by targeting DNA replication licensing factor CDT1 for degradation. Potentiates but cannot initiate FAS-induced apoptosis. The protein is FAS-associated factor 1 (Faf1) of Mus musculus (Mouse).